The chain runs to 463 residues: ATP-dependent protease ATPase subunit HslU (463 aa).

Residues I19 and 61–66 contribute to the ATP site; that span reads GVGKTE. The segment at 154-175 is disordered; it reads FGGNQNSNQTSDAQEDDEIEKK. Residues 156–165 show a composition bias toward polar residues; the sequence is GNQNSNQTSD. ATP is bound by residues D277, E341, and R413.

Belongs to the ClpX chaperone family. HslU subfamily. In terms of assembly, a double ring-shaped homohexamer of HslV is capped on each side by a ring-shaped HslU homohexamer. The assembly of the HslU/HslV complex is dependent on binding of ATP.

The protein resides in the cytoplasm. ATPase subunit of a proteasome-like degradation complex; this subunit has chaperone activity. The binding of ATP and its subsequent hydrolysis by HslU are essential for unfolding of protein substrates subsequently hydrolyzed by HslV. HslU recognizes the N-terminal part of its protein substrates and unfolds these before they are guided to HslV for hydrolysis. The chain is ATP-dependent protease ATPase subunit HslU from Bacillus mycoides (strain KBAB4) (Bacillus weihenstephanensis).